The chain runs to 316 residues: 4-hydroxy-3-methylbut-2-enyl diphosphate reductase (316 aa).

Cys-12 is a binding site for [4Fe-4S] cluster. Positions 41 and 74 each coordinate (2E)-4-hydroxy-3-methylbut-2-enyl diphosphate. Dimethylallyl diphosphate contacts are provided by His-41 and His-74. Residues His-41 and His-74 each contribute to the isopentenyl diphosphate site. A [4Fe-4S] cluster-binding site is contributed by Cys-96. His-124 contributes to the (2E)-4-hydroxy-3-methylbut-2-enyl diphosphate binding site. Residue His-124 coordinates dimethylallyl diphosphate. Position 124 (His-124) interacts with isopentenyl diphosphate. Glu-126 acts as the Proton donor in catalysis. Position 168 (Thr-168) interacts with (2E)-4-hydroxy-3-methylbut-2-enyl diphosphate. Residue Cys-198 coordinates [4Fe-4S] cluster. (2E)-4-hydroxy-3-methylbut-2-enyl diphosphate contacts are provided by Ser-226, Ser-227, Asn-228, and Ser-270. Residues Ser-226, Ser-227, Asn-228, and Ser-270 each coordinate dimethylallyl diphosphate. Residues Ser-226, Ser-227, Asn-228, and Ser-270 each coordinate isopentenyl diphosphate.

It belongs to the IspH family. [4Fe-4S] cluster is required as a cofactor.

The catalysed reaction is isopentenyl diphosphate + 2 oxidized [2Fe-2S]-[ferredoxin] + H2O = (2E)-4-hydroxy-3-methylbut-2-enyl diphosphate + 2 reduced [2Fe-2S]-[ferredoxin] + 2 H(+). It carries out the reaction dimethylallyl diphosphate + 2 oxidized [2Fe-2S]-[ferredoxin] + H2O = (2E)-4-hydroxy-3-methylbut-2-enyl diphosphate + 2 reduced [2Fe-2S]-[ferredoxin] + 2 H(+). Its pathway is isoprenoid biosynthesis; dimethylallyl diphosphate biosynthesis; dimethylallyl diphosphate from (2E)-4-hydroxy-3-methylbutenyl diphosphate: step 1/1. The protein operates within isoprenoid biosynthesis; isopentenyl diphosphate biosynthesis via DXP pathway; isopentenyl diphosphate from 1-deoxy-D-xylulose 5-phosphate: step 6/6. In terms of biological role, catalyzes the conversion of 1-hydroxy-2-methyl-2-(E)-butenyl 4-diphosphate (HMBPP) into a mixture of isopentenyl diphosphate (IPP) and dimethylallyl diphosphate (DMAPP). Acts in the terminal step of the DOXP/MEP pathway for isoprenoid precursor biosynthesis. This chain is 4-hydroxy-3-methylbut-2-enyl diphosphate reductase, found in Acinetobacter baumannii (strain AB307-0294).